We begin with the raw amino-acid sequence, 148 residues long: Large ribosomal subunit protein bL9 (148 aa).

The protein belongs to the bacterial ribosomal protein bL9 family.

Functionally, binds to the 23S rRNA. This is Large ribosomal subunit protein bL9 from Staphylococcus haemolyticus (strain JCSC1435).